A 420-amino-acid polypeptide reads, in one-letter code: Glucose-1-phosphate adenylyltransferase (420 aa).

Alpha-D-glucose 1-phosphate is bound by residues Tyr-107, Gly-172, 187–188 (EK), and Ser-205.

It belongs to the bacterial/plant glucose-1-phosphate adenylyltransferase family. In terms of assembly, homotetramer.

The enzyme catalyses alpha-D-glucose 1-phosphate + ATP + H(+) = ADP-alpha-D-glucose + diphosphate. Its pathway is glycan biosynthesis; glycogen biosynthesis. In terms of biological role, involved in the biosynthesis of ADP-glucose, a building block required for the elongation reactions to produce glycogen. Catalyzes the reaction between ATP and alpha-D-glucose 1-phosphate (G1P) to produce pyrophosphate and ADP-Glc. The protein is Glucose-1-phosphate adenylyltransferase of Rhizobium radiobacter (Agrobacterium tumefaciens).